Consider the following 814-residue polypeptide: Rho GTPase-activating protein 26 (814 aa).

Positions 7–262 constitute a BAR domain; the sequence is EFSDCCLDSP…MKENPLEHKT (256 aa). Positions 265-369 constitute a PH domain; it reads PYTMEGYLYV…WMEAMDGREP (105 aa). The region spanning 383-568 is the Rho-GAP domain; that stretch reads AQLDSIGFSI…ILIENHEKIF (186 aa). Disordered stretches follow at residues 584 to 618 and 638 to 696; these read SRKK…QRNS and SSSL…SSDS. Low complexity-rich tracts occupy residues 591–600 and 638–661; these read SKPPSCSKRP and SSSL…SRPS. A compositionally biased stretch (pro residues) spans 662–672; that stretch reads SLPPNPSPTSP. The residue at position 668 (Ser-668) is a Phosphoserine. Thr-670 carries the phosphothreonine modification. Ser-671 carries the post-translational modification Phosphoserine. Over residues 673 to 696 the composition is skewed to low complexity; the sequence is LSPSWPMFSAPSSPMPTSSTSSDS. The region spanning 756 to 814 is the SH3 domain; it reads TPFRKAKALYACQAEHDSELSFTAGTVFDNVHPSQEPGWLEGTLNGKTGLIPENYVEFL.

As to quaternary structure, interacts with NYAP1, NYAP2 and MYO16. Interacts with MICAL1 and WDR44. Binds to the C-terminus of PTK2/FAK1. In terms of processing, phosphorylated in a PINK1-dependent fashion promoting retrograde mitochondrial trafficking and clustering.

The protein resides in the cell junction. Its subcellular location is the focal adhesion. It is found in the cytoplasm. The protein localises to the cytoskeleton. It localises to the endosome membrane. Its function is as follows. GTPase-activating protein for RHOA and CDC42. Facilitates mitochondrial quality control by promoting Parkin-mediated recruitment of autophagosomes to damaged mitochondria. Associates with MICAL1 on the endosomal membrane to promote Rab8-Rab10-dependent tubule extension. After dissociation of MICAL1, recruits WDR44 which connects the endoplasmic reticulum (ER) with the endosomal tubule, thereby participating in the export of a subset of neosynthesized proteins. The sequence is that of Rho GTPase-activating protein 26 (Arhgap26) from Mus musculus (Mouse).